The following is a 336-amino-acid chain: HTH-type transcriptional repressor PurR (336 aa).

The HTH lacI-type domain occupies alanine 2–valine 56. A DNA-binding region (H-T-H motif) is located at residues isoleucine 4–asparagine 23. The DNA-binding element occupies serine 48–valine 56. 5 residues coordinate hypoxanthine: tyrosine 73, lysine 188, threonine 190, phenylalanine 219, and aspartate 273.

As to quaternary structure, homodimer.

It functions in the pathway purine metabolism; purine nucleotide biosynthesis [regulation]. Its function is as follows. Is the main repressor of the genes involved in the de novo synthesis of purine nucleotides, regulating purB, purC, purEK, purF, purHD, purL, purMN and guaBA expression. PurR is allosterically activated to bind its cognate DNA by binding the purine corepressors, hypoxanthine or guanine, thereby effecting transcription repression. The chain is HTH-type transcriptional repressor PurR from Haemophilus influenzae (strain PittGG).